The following is a 471-amino-acid chain: ATP synthase subunit beta (471 aa).

ATP is bound at residue 152 to 159 (GGAGVGKT).

Belongs to the ATPase alpha/beta chains family. As to quaternary structure, F-type ATPases have 2 components, CF(1) - the catalytic core - and CF(0) - the membrane proton channel. CF(1) has five subunits: alpha(3), beta(3), gamma(1), delta(1), epsilon(1). CF(0) has three main subunits: a(1), b(2) and c(9-12). The alpha and beta chains form an alternating ring which encloses part of the gamma chain. CF(1) is attached to CF(0) by a central stalk formed by the gamma and epsilon chains, while a peripheral stalk is formed by the delta and b chains.

Its subcellular location is the cell membrane. It carries out the reaction ATP + H2O + 4 H(+)(in) = ADP + phosphate + 5 H(+)(out). Functionally, produces ATP from ADP in the presence of a proton gradient across the membrane. The catalytic sites are hosted primarily by the beta subunits. In Herpetosiphon aurantiacus (strain ATCC 23779 / DSM 785 / 114-95), this protein is ATP synthase subunit beta.